The following is a 299-amino-acid chain: Putative transposase InsZ (299 aa).

Residues 276–291 (PSRPRSVKISKTRYPV) show a composition bias toward basic residues. The tract at residues 276-299 (PSRPRSVKISKTRYPVKHSAAPLK) is disordered.

In Escherichia coli (strain K12), this protein is Putative transposase InsZ (insZ).